The primary structure comprises 497 residues: Arginine/ornithine antiporter ArcD2 (497 aa).

Transmembrane regions (helical) follow at residues 8–28 (GISL…GGVF), 41–61 (GGVV…VLSF), 88–108 (FLSG…FAVL), 127–147 (SLTI…MLLV), 160–180 (IVMI…IILF), 220–240 (IKGS…ATMM), 255–275 (VIGL…PYGY), 297–317 (VGGW…LGAW), 354–374 (LLIT…VANA), 378–398 (FIYM…AYLF), 406–426 (SVKN…ALYL), 429–449 (WQYV…FIGA), and 462–482 (WLGM…LICG).

Belongs to the amino acid-polyamine-organocation (APC) superfamily. Basic amino acid/polyamine antiporter (APA) (TC 2.A.3.2) family.

Its subcellular location is the cell membrane. It carries out the reaction L-ornithine(in) + L-arginine(out) = L-ornithine(out) + L-arginine(in). Functionally, catalyzes electroneutral exchange between L-arginine and L-ornithine. Can also efficiently translocate L-alanine. May function in vivo as a L-arginine/L-alanine exchanger in a pathway together with the arcT gene, which is found adjacent to the arcD2 gene in the ADI gene cluster. The sequence is that of Arginine/ornithine antiporter ArcD2 from Lactococcus lactis subsp. cremoris (strain MG1363).